Consider the following 30-residue polypeptide: Mycofactocin precursor peptide (30 aa).

It belongs to the mycofactocin precursor peptide family. As to quaternary structure, interacts with MftB. The post-translational modifications that lead to mycofactocin involve oxidative decarboxylation of the C-terminal tyrosine residue catalyzed by MftC, introduction of a tyramine-valine cross-link, removal of the modified C-terminal dipeptide by MftE. The released dipeptide then undergoes oxidative deamination by MftD, glycosylation by MftF and methylation by an unknown enzyme.

Precursor peptide that leads to mycofactocin (MFT) after extensive post-translational modifications by enzymes encoded by adjacent genes. Mycofactocin acts as a redox cofactor of nicotinamide-dependent oxidoreductases encoded in the same locus. The polypeptide is Mycofactocin precursor peptide (Mycobacterium ulcerans (strain Agy99)).